A 227-amino-acid chain; its full sequence is Ribonuclease 3 (227 aa).

One can recognise an RNase III domain in the interval 7–132; that stretch reads LTAFMDRLGY…VIAAVYLDGG (126 aa). Glutamate 45 contributes to the Mg(2+) binding site. Aspartate 49 is an active-site residue. 2 residues coordinate Mg(2+): aspartate 118 and glutamate 121. The active site involves glutamate 121. In terms of domain architecture, DRBM spans 157–226; that stretch reads DAKTALQEWA…AKDLLAQLAG (70 aa).

It belongs to the ribonuclease III family. As to quaternary structure, homodimer. It depends on Mg(2+) as a cofactor.

It is found in the cytoplasm. The catalysed reaction is Endonucleolytic cleavage to 5'-phosphomonoester.. Digests double-stranded RNA. Involved in the processing of primary rRNA transcript to yield the immediate precursors to the large and small rRNAs (23S and 16S). Processes some mRNAs, and tRNAs when they are encoded in the rRNA operon. Processes pre-crRNA and tracrRNA of type II CRISPR loci if present in the organism. The protein is Ribonuclease 3 of Jannaschia sp. (strain CCS1).